Reading from the N-terminus, the 247-residue chain is Adenosylcobinamide-GDP ribazoletransferase (247 aa).

Helical transmembrane passes span Ile34–Leu54, Cys59–Phe79, Gly113–Leu133, Met138–Tyr158, Val171–Val191, and Val194–Ile214.

The protein belongs to the CobS family. Mg(2+) is required as a cofactor.

The protein resides in the cell inner membrane. The catalysed reaction is alpha-ribazole + adenosylcob(III)inamide-GDP = adenosylcob(III)alamin + GMP + H(+). It carries out the reaction alpha-ribazole 5'-phosphate + adenosylcob(III)inamide-GDP = adenosylcob(III)alamin 5'-phosphate + GMP + H(+). The protein operates within cofactor biosynthesis; adenosylcobalamin biosynthesis; adenosylcobalamin from cob(II)yrinate a,c-diamide: step 7/7. Functionally, joins adenosylcobinamide-GDP and alpha-ribazole to generate adenosylcobalamin (Ado-cobalamin). Also synthesizes adenosylcobalamin 5'-phosphate from adenosylcobinamide-GDP and alpha-ribazole 5'-phosphate. This chain is Adenosylcobinamide-GDP ribazoletransferase, found in Salmonella paratyphi A (strain ATCC 9150 / SARB42).